Consider the following 291-residue polypeptide: Ribosomal RNA small subunit methyltransferase H (291 aa).

S-adenosyl-L-methionine contacts are provided by residues 31-33 (GGY), Asp-49, Phe-76, Asp-97, and Gln-104.

This sequence belongs to the methyltransferase superfamily. RsmH family.

Its subcellular location is the cytoplasm. It catalyses the reaction cytidine(1402) in 16S rRNA + S-adenosyl-L-methionine = N(4)-methylcytidine(1402) in 16S rRNA + S-adenosyl-L-homocysteine + H(+). Its function is as follows. Specifically methylates the N4 position of cytidine in position 1402 (C1402) of 16S rRNA. This is Ribosomal RNA small subunit methyltransferase H from Anaplasma marginale (strain St. Maries).